The primary structure comprises 813 residues: Leucine--tRNA ligase (813 aa).

The 'HIGH' region signature appears at 42–52 (PYTSGNLHIGH). Positions 580 to 584 (KMSKS) match the 'KMSKS' region motif. Position 583 (lysine 583) interacts with ATP.

It belongs to the class-I aminoacyl-tRNA synthetase family.

Its subcellular location is the cytoplasm. It carries out the reaction tRNA(Leu) + L-leucine + ATP = L-leucyl-tRNA(Leu) + AMP + diphosphate. In Dehalococcoides mccartyi (strain ATCC BAA-2100 / JCM 16839 / KCTC 5957 / BAV1), this protein is Leucine--tRNA ligase.